The following is a 396-amino-acid chain: Histidine-rich glycoprotein (396 aa).

Cystatin domains are found at residues 1-102 and 103-169; these read AVNP…SALT and NMRA…RFSA. Intrachain disulfides connect Cys-7–Cys-375, Cys-56–Cys-67, Cys-77–Cys-92, Cys-123–Cys-297, Cys-137–Cys-160, and Cys-212–Cys-242. Asn-70 carries N-linked (GlcNAc...) asparagine; partial glycosylation. Asn-91 and Asn-122 each carry an N-linked (GlcNAc...) asparagine glycan. The disordered stretch occupies residues 176–322; it reads RPFHSGEHEH…GPGKGHFRFH (147 aa). Over residues 197–208 the composition is skewed to basic and acidic residues; the sequence is GSKDHGHPHESY. Asn-220 is a glycosylation site (N-linked (GlcNAc...) asparagine). Positions 233–246 are enriched in pro residues; it reads LPFPPPGLRCPHPP. Basic and acidic residues predominate over residues 255 to 265; sequence PPHDHSSDEHH. Residues 266–284 show a composition bias toward basic residues; it reads PHGHHPHGHHPHGHHPHGH. Positions 285–296 are enriched in basic and acidic residues; it reads HPPDNDFYDHGP. The segment covering 304-322 has biased composition (basic residues); it reads PPPRHSKERGPGKGHFRFH. A Phosphoserine modification is found at Ser-309.

As to quaternary structure, interacts (via the HRR domain) with TPM1; the interaction appears to contribute to the antiangiogenic properties of the HRR domain. Interacts with THBS1 (via the TSP type I repeats); the interaction blocks the antiangiogenic effect of THBS1 with CD36. Interacts with PLG (via its Kringle domains); the interaction tethers PLG to the cell surface and enhances its activation. Interacts with THBS2; the interaction blocks the antiangiogenic effect of THBS2 with CD36. Interacts with HPSE; the interaction is enhanced at acidic pH, partially inhibits binding of HPSE to cell surface receptors and modulates its enzymatic activity. Interacts (via the HRR domain) with TMP1; the interaction partially mediates the antiangiogenic properties of HRG. Interacts with kappa and lambda light chains of IgG molecules. Interacts with ATP5F1A; the interaction occurs on the surface of T-cells and alters their cell morphology in concert with CONA. Binds IgG molecules containing kappa and lambda light chains and inhibits the formation of insoluble immunoglobulin complexes. Interacts with F12; the interaction, which is enhanced in the presence of zinc ions and inhibited by heparin-binding to HRG, inhibits factor XII autoactivation and contact-initiated coagulation. In terms of processing, N-glycosylated. Post-translationally, proteolytic cleavage produces several HRG fragments which are mostly disulfide-linked and, therefore, not released. On platelet activation, may release a 33 kDa antiangiogenic peptide which encompasses the HRR.

The protein localises to the secreted. Its function is as follows. Plasma glycoprotein that binds a number of ligands such as heme, heparin, heparan sulfate, thrombospondin, plasminogen, and divalent metal ions. Inhibits rosette formation. Acts as an adapter protein and implicated in regulating many processes such as immune complex and pathogen clearance, cell adhesion, angiogenesis, coagulation and fibrinolysis. Mediates clearance of necrotic cells through enhancing the phagocytosis of necrotic cells in a heparan sulfate-dependent pathway. This process can be regulated by the presence of certain HRG ligands such as heparin and zinc ions. Binds to IgG subclasses of immunoglobins containing kappa and lambda light chains with different affinities regulating their clearance and inhibiting the formation of insoluble immune complexes. Tethers plasminogen to the cell surface. Binds T-cells and alters the cell morphology. Modulates angiogenesis by blocking the CD6-mediated antiangiongenic effect of thrombospondins, THBS1 and THBS2. The protein is Histidine-rich glycoprotein (HRG) of Bos taurus (Bovine).